Reading from the N-terminus, the 237-residue chain is Large ribosomal subunit protein uL1 (237 aa).

It belongs to the universal ribosomal protein uL1 family. As to quaternary structure, part of the 50S ribosomal subunit.

Its function is as follows. Binds directly to 23S rRNA. The L1 stalk is quite mobile in the ribosome, and is involved in E site tRNA release. Functionally, protein L1 is also a translational repressor protein, it controls the translation of the L11 operon by binding to its mRNA. The chain is Large ribosomal subunit protein uL1 from Myxococcus xanthus (strain DK1622).